Here is a 355-residue protein sequence, read N- to C-terminus: Protein-glutamate methylesterase/protein-glutamine glutaminase (355 aa).

In terms of domain architecture, Response regulatory spans 4–121 (KVLIIDDSAL…ANGMHEYSEM (118 aa)). At Asp-55 the chain carries 4-aspartylphosphate. The region spanning 156 to 348 (LISSEKLIII…GRVLQYLAAN (193 aa)) is the CheB-type methylesterase domain. Residues Ser-168, His-194, and Asp-290 contribute to the active site.

It belongs to the CheB family. In terms of processing, phosphorylated by CheA. Phosphorylation of the N-terminal regulatory domain activates the methylesterase activity.

It is found in the cytoplasm. The catalysed reaction is [protein]-L-glutamate 5-O-methyl ester + H2O = L-glutamyl-[protein] + methanol + H(+). It carries out the reaction L-glutaminyl-[protein] + H2O = L-glutamyl-[protein] + NH4(+). Functionally, involved in chemotaxis. Part of a chemotaxis signal transduction system that modulates chemotaxis in response to various stimuli. Catalyzes the demethylation of specific methylglutamate residues introduced into the chemoreceptors (methyl-accepting chemotaxis proteins or MCP) by CheR. Also mediates the irreversible deamidation of specific glutamine residues to glutamic acid. This chain is Protein-glutamate methylesterase/protein-glutamine glutaminase, found in Methylobacillus flagellatus (strain ATCC 51484 / DSM 6875 / VKM B-1610 / KT).